Reading from the N-terminus, the 719-residue chain is Anaphase-promoting complex subunit 4 (719 aa).

Residues 57–96 form a WD repeat; the sequence is NSQRIWDVDFHDLEATELCWNHDGNLIVVGFKNGELKIID.

As to quaternary structure, the APC/C is composed of at least 13 subunits: apc1, apc2, nuc2, apc4, apc5, cut9, apc8, apc10, apc11, hcn1, apc13, apc14 and apc15. Interacts with apc1 and dim1.

Functionally, component of the anaphase-promoting complex/cyclosome (APC/C), a cell cycle-regulated E3 ubiquitin-protein ligase complex that controls progression through mitosis and the G1 phase of the cell cycle. The APC/C is thought to confer substrate specificity and, in the presence of ubiquitin-conjugating E2 enzymes, it catalyzes the formation of protein-ubiquitin conjugates that are subsequently degraded by the 26S proteasome. Has a role in promoting metaphase to anaphase transition via the ubiquitination of specific mitotic substrates. The sequence is that of Anaphase-promoting complex subunit 4 (cut20) from Schizosaccharomyces pombe (strain 972 / ATCC 24843) (Fission yeast).